Here is a 278-residue protein sequence, read N- to C-terminus: MNIIDAIINLANNPVVGVESHSQSNNRANQAGDALEEYVKDLFSGSFNLNETQRIARHAKVFSYLGNNSNPPDAMLRNGDAIEVKKIESKDSALALNSSHPKSKLSVDDSMLTKACKDAEKWEEKDIIYIVGVVDKKKNLKHLAMVYGIDYCADAECYLKIKNQIKEGIGNIGGIQFAETKELGRVNRIDPLNITYLRVRGMWGIENPWFVFNYIYQRNMEKSFNFMAIINEDKWNSFNNTDKLLAIQDSKLAISDIKIKNPNNPARLRNAKLITYHL.

Belongs to the NgoPII type II restriction endonuclease family.

The enzyme catalyses Endonucleolytic cleavage of DNA to give specific double-stranded fragments with terminal 5'-phosphates.. A P subtype restriction enzyme that recognizes the double-stranded sequence 5'-GGCC-3' and cleaves after G-2. The chain is Type II restriction enzyme NgoPII (ngoPIIR) from Neisseria gonorrhoeae.